Reading from the N-terminus, the 393-residue chain is S-adenosylmethionine synthase 2 (393 aa).

Glu-9 is a Mg(2+) binding site. Position 15 (His-15) interacts with ATP. Glu-43 contributes to the K(+) binding site. Glu-56 and Gln-99 together coordinate L-methionine. Residues 167–169 (DGK), 235–238 (SGRF), Asp-246, 252–253 (RK), Ala-269, Lys-273, and Lys-277 contribute to the ATP site. Position 246 (Asp-246) interacts with L-methionine. Lys-277 serves as a coordination point for L-methionine.

It belongs to the AdoMet synthase family. Homotetramer. Mn(2+) is required as a cofactor. Mg(2+) serves as cofactor. It depends on Co(2+) as a cofactor. The cofactor is K(+).

It is found in the cytoplasm. The catalysed reaction is L-methionine + ATP + H2O = S-adenosyl-L-methionine + phosphate + diphosphate. It functions in the pathway amino-acid biosynthesis; S-adenosyl-L-methionine biosynthesis; S-adenosyl-L-methionine from L-methionine: step 1/1. In terms of biological role, catalyzes the formation of S-adenosylmethionine from methionine and ATP. The reaction comprises two steps that are both catalyzed by the same enzyme: formation of S-adenosylmethionine (AdoMet) and triphosphate, and subsequent hydrolysis of the triphosphate. The chain is S-adenosylmethionine synthase 2 (METK2) from Vitis vinifera (Grape).